The chain runs to 356 residues: Tyrosine recombinase XerS (356 aa).

A Core-binding (CB) domain is found at 16–121; sequence LMPWYVLEYY…ALSSLYKYLT (106 aa). The region spanning 169 to 354 is the Tyr recombinase domain; it reads GFLTYIDQEH…VSDEQKNALD (186 aa). Active-site residues include Arg-210, Lys-234, His-306, Arg-309, and His-332. The active-site O-(3'-phospho-DNA)-tyrosine intermediate is the Tyr-341.

It belongs to the 'phage' integrase family. XerS subfamily.

The protein resides in the cytoplasm. FtsK is required for recombination. Functionally, site-specific tyrosine recombinase, which acts by catalyzing the cutting and rejoining of the recombining DNA molecules. Essential to convert dimers of the bacterial chromosome into monomers to permit their segregation at cell division. This chain is Tyrosine recombinase XerS, found in Streptococcus pneumoniae (strain 70585).